The chain runs to 265 residues: Hydroxyethylthiazole kinase (265 aa).

M44 provides a ligand contact to substrate. 2 residues coordinate ATP: K120 and T166. Substrate is bound at residue G193.

This sequence belongs to the Thz kinase family. It depends on Mg(2+) as a cofactor.

It carries out the reaction 5-(2-hydroxyethyl)-4-methylthiazole + ATP = 4-methyl-5-(2-phosphooxyethyl)-thiazole + ADP + H(+). It functions in the pathway cofactor biosynthesis; thiamine diphosphate biosynthesis; 4-methyl-5-(2-phosphoethyl)-thiazole from 5-(2-hydroxyethyl)-4-methylthiazole: step 1/1. Its function is as follows. Catalyzes the phosphorylation of the hydroxyl group of 4-methyl-5-beta-hydroxyethylthiazole (THZ). This chain is Hydroxyethylthiazole kinase, found in Clostridium novyi (strain NT).